We begin with the raw amino-acid sequence, 1026 residues long: HEAT repeat-containing protein 4 (1026 aa).

Residues A135–L175 are disordered. HEAT repeat units follow at residues L530–Q568, K724–D760, and K761–S794.

This Homo sapiens (Human) protein is HEAT repeat-containing protein 4 (HEATR4).